Reading from the N-terminus, the 554-residue chain is 2-succinyl-5-enolpyruvyl-6-hydroxy-3-cyclohexene-1-carboxylate synthase (554 aa).

Belongs to the TPP enzyme family. MenD subfamily. As to quaternary structure, homodimer. The cofactor is Mg(2+). Mn(2+) serves as cofactor. It depends on thiamine diphosphate as a cofactor.

It catalyses the reaction isochorismate + 2-oxoglutarate + H(+) = 5-enolpyruvoyl-6-hydroxy-2-succinyl-cyclohex-3-ene-1-carboxylate + CO2. Its pathway is quinol/quinone metabolism; 1,4-dihydroxy-2-naphthoate biosynthesis; 1,4-dihydroxy-2-naphthoate from chorismate: step 2/7. It functions in the pathway quinol/quinone metabolism; menaquinone biosynthesis. Its function is as follows. Catalyzes the thiamine diphosphate-dependent decarboxylation of 2-oxoglutarate and the subsequent addition of the resulting succinic semialdehyde-thiamine pyrophosphate anion to isochorismate to yield 2-succinyl-5-enolpyruvyl-6-hydroxy-3-cyclohexene-1-carboxylate (SEPHCHC). The polypeptide is 2-succinyl-5-enolpyruvyl-6-hydroxy-3-cyclohexene-1-carboxylate synthase (Lactococcus lactis subsp. cremoris (strain SK11)).